The following is a 460-amino-acid chain: NADH-ubiquinone oxidoreductase chain 4 (460 aa).

12 helical membrane-spanning segments follow: residues 20-42, 61-81, 93-113, 114-134, 148-168, 195-215, 225-245, 258-278, 285-304, 308-330, 351-371, and 394-414; these read PKWL…LMWF, PLST…ILAS, QRLY…AFGA, TEII…LIII, TYFL…LLLL, IWWA…GVHL, PVAG…YGMM, LAYP…SICL, SLIA…GILI, WGFS…LFCL, IIFP…LALP, and ILLT…MFLM.

Belongs to the complex I subunit 4 family.

Its subcellular location is the mitochondrion membrane. It catalyses the reaction a ubiquinone + NADH + 5 H(+)(in) = a ubiquinol + NAD(+) + 4 H(+)(out). Core subunit of the mitochondrial membrane respiratory chain NADH dehydrogenase (Complex I) that is believed to belong to the minimal assembly required for catalysis. Complex I functions in the transfer of electrons from NADH to the respiratory chain. The immediate electron acceptor for the enzyme is believed to be ubiquinone. The polypeptide is NADH-ubiquinone oxidoreductase chain 4 (MT-ND4) (Carassius auratus (Goldfish)).